Reading from the N-terminus, the 145-residue chain is Basic phospholipase A2 cPt09 (145 aa).

A signal peptide spans 1 to 21 (MYPAHLLVLLAVCVSLLGAST). The propeptide occupies 22 to 27 (IPPLPL). 7 cysteine pairs are disulfide-bonded: cysteine 38-cysteine 98, cysteine 54-cysteine 144, cysteine 56-cysteine 72, cysteine 71-cysteine 125, cysteine 78-cysteine 118, cysteine 87-cysteine 111, and cysteine 105-cysteine 116. Tyrosine 55, glycine 57, and glycine 59 together coordinate Ca(2+). Histidine 75 is a catalytic residue. Aspartate 76 serves as a coordination point for Ca(2+). Aspartate 119 is a catalytic residue.

This sequence belongs to the phospholipase A2 family. Group I subfamily. D49 sub-subfamily. Ca(2+) is required as a cofactor. Expressed by the venom gland.

Its subcellular location is the secreted. The enzyme catalyses a 1,2-diacyl-sn-glycero-3-phosphocholine + H2O = a 1-acyl-sn-glycero-3-phosphocholine + a fatty acid + H(+). Functionally, PLA2 catalyzes the calcium-dependent hydrolysis of the 2-acyl groups in 3-sn-phosphoglycerides. This is Basic phospholipase A2 cPt09 from Laticauda semifasciata (Black-banded sea krait).